The primary structure comprises 62 residues: UPF0434 protein ASA_1553 (62 aa).

This sequence belongs to the UPF0434 family.

In Aeromonas salmonicida (strain A449), this protein is UPF0434 protein ASA_1553.